We begin with the raw amino-acid sequence, 300 residues long: MIQSRQLEAFRPVMLTGGMTSAANLVRITQPAISRLIRDLEEEIGISLFERTGNRLRPTREAGILFKEVSRHFNGIQHIDKVAAELKKSHMGSLRVACYTAPALSFMSGVIQTFIADRPDVSVYLDTVPSQTVLELVSLQHYDLGISILAGDYPGLTTEPVPSFRAVCLLPPGHRLEDKETVHATDLEGESLICLSPVSLLRMQTDAALDSCGVHCNRRIESSLALNLCDLVSRGMGVGIVDPFTADYYSANPVIQRSFDPVVPYHFAIVLPTDSPPPRLVSEFRAALLDALKALPYETI.

An HTH lysR-type domain is found at 1-59 (MIQSRQLEAFRPVMLTGGMTSAANLVRITQPAISRLIRDLEEEIGISLFERTGNRLRPT). Positions 19–38 (MTSAANLVRITQPAISRLIR) form a DNA-binding region, H-T-H motif.

The protein belongs to the LysR transcriptional regulatory family.

Its function is as follows. Positive regulatory protein for the noc operon involved in nopaline catabolism and uptake. The sequence is that of Regulatory protein NocR (nocR) from Agrobacterium tumefaciens (strain T37).